A 470-amino-acid chain; its full sequence is 6-phospho-beta-galactosidase (470 aa).

D-galactose 6-phosphate is bound by residues Q19, H116, N159, E160, and N297. The active-site Proton donor is the E160. Catalysis depends on E375, which acts as the Nucleophile. Residues S430, W431, K437, and Y439 each contribute to the D-galactose 6-phosphate site.

This sequence belongs to the glycosyl hydrolase 1 family.

The catalysed reaction is a 6-phospho-beta-D-galactoside + H2O = D-galactose 6-phosphate + an alcohol. Its pathway is carbohydrate metabolism; lactose degradation; D-galactose 6-phosphate and beta-D-glucose from lactose 6-phosphate: step 1/1. This chain is 6-phospho-beta-galactosidase, found in Staphylococcus aureus (strain MRSA252).